The sequence spans 173 residues: Photosystem I assembly protein Ycf3 (173 aa).

3 TPR repeats span residues 35–68, 72–105, and 120–153; these read AFVY…EENP, SYIL…NPKM, and GEKA…APNN.

It belongs to the Ycf3 family.

It localises to the cellular thylakoid membrane. Its function is as follows. Essential for the assembly of the photosystem I (PSI) complex. May act as a chaperone-like factor to guide the assembly of the PSI subunits. This Synechocystis sp. (strain ATCC 27184 / PCC 6803 / Kazusa) protein is Photosystem I assembly protein Ycf3.